We begin with the raw amino-acid sequence, 351 residues long: Protein RecA (351 aa).

68 to 75 (GPESSGKT) contributes to the ATP binding site.

This sequence belongs to the RecA family.

The protein localises to the cytoplasm. Its function is as follows. Can catalyze the hydrolysis of ATP in the presence of single-stranded DNA, the ATP-dependent uptake of single-stranded DNA by duplex DNA, and the ATP-dependent hybridization of homologous single-stranded DNAs. It interacts with LexA causing its activation and leading to its autocatalytic cleavage. In Chloroflexus aggregans (strain MD-66 / DSM 9485), this protein is Protein RecA.